The following is a 267-amino-acid chain: Palmitoyltransferase ZDHHC12 (267 aa).

Residues 1-9 (MALWPPLNS) are Cytoplasmic-facing. A helical membrane pass occupies residues 10-30 (GMLVRTGHTVLTWGITLVLFL). The Lumenal portion of the chain corresponds to 31-43 (HDTELRQWEEQGE). The helical transmembrane segment at 44-64 (LLLPLTFLLLVLSSLLLYLAV) threads the bilayer. Topologically, residues 65-140 (SLMDPGYVTT…ENCVGERNHP (76 aa)) are cytoplasmic. Positions 97-147 (RRCRHCLVLQPLRARHCRDCRRCVRRYDHHCPWMENCVGERNHPLFVAYLA) constitute a DHHC domain. Cysteine 127 (S-palmitoyl cysteine intermediate) is an active-site residue. Residues 141–161 (LFVAYLALQLVVLLWGLCLAW) traverse the membrane as a helical segment. Residues 162-178 (SGLQFFQPWGLWLRSTG) lie on the Lumenal side of the membrane. The helical transmembrane segment at 179–199 (LLFTTFLLLSFFALVVALLLA) threads the bilayer. Over 200 to 267 (SHLYLVARNT…EEEEGSSQVV (68 aa)) the chain is Cytoplasmic.

It belongs to the DHHC palmitoyltransferase family.

The protein resides in the golgi apparatus membrane. It localises to the endoplasmic reticulum membrane. The enzyme catalyses L-cysteinyl-[protein] + hexadecanoyl-CoA = S-hexadecanoyl-L-cysteinyl-[protein] + CoA. Its function is as follows. Palmitoyltransferase that catalyzes the addition of palmitate onto various protein substrates. Has a palmitoyltransferase activity toward gephyrin/GPHN, regulating its clustering at synapses and its function in gamma-aminobutyric acid receptor clustering. Thereby, indirectly regulates GABAergic synaptic transmission. Negatively regulates NLRP3-driven inflammation. Catalyzes NLRP3 palmitoylation, leading to its degradation via the chaperone-mediated autophagy (CMA) process. This chain is Palmitoyltransferase ZDHHC12, found in Mus musculus (Mouse).